The primary structure comprises 371 residues: Putative transport protein YtvI (371 aa).

Helical transmembrane passes span 6–26, 30–50, 65–85, 168–188, 225–245, 256–276, 283–303, 312–332, and 334–354; these read ITIFFRTLFVISMTAGSIAAA, FPLTYPFLIALILSSVIHPVV, VLGVLAFFLLAAFGVLTILVA, FFALLPNTAAVLIFSLLATFF, GFIKAQAVLVFITMVIVFIGL, IAFLIGLVDLLPYLGAGSVFV, SITGQLPQAIGIGILYLVVLI, ILSKSIGIDPLATLIALFAGF, and LFGFLGLIAGPAVLVIIQAFI.

It belongs to the autoinducer-2 exporter (AI-2E) (TC 2.A.86) family.

It is found in the cell membrane. The sequence is that of Putative transport protein YtvI (ytvI) from Bacillus subtilis (strain 168).